The primary structure comprises 413 residues: Arginine biosynthesis bifunctional protein ArgJ (413 aa).

Residues Thr158, Lys184, Thr195, Glu285, Asn408, and Ser413 each contribute to the substrate site. The Nucleophile role is filled by Thr195.

This sequence belongs to the ArgJ family. As to quaternary structure, heterotetramer of two alpha and two beta chains.

Its subcellular location is the cytoplasm. The catalysed reaction is N(2)-acetyl-L-ornithine + L-glutamate = N-acetyl-L-glutamate + L-ornithine. It carries out the reaction L-glutamate + acetyl-CoA = N-acetyl-L-glutamate + CoA + H(+). It functions in the pathway amino-acid biosynthesis; L-arginine biosynthesis; L-ornithine and N-acetyl-L-glutamate from L-glutamate and N(2)-acetyl-L-ornithine (cyclic): step 1/1. Its pathway is amino-acid biosynthesis; L-arginine biosynthesis; N(2)-acetyl-L-ornithine from L-glutamate: step 1/4. Functionally, catalyzes two activities which are involved in the cyclic version of arginine biosynthesis: the synthesis of N-acetylglutamate from glutamate and acetyl-CoA as the acetyl donor, and of ornithine by transacetylation between N(2)-acetylornithine and glutamate. This Agrobacterium fabrum (strain C58 / ATCC 33970) (Agrobacterium tumefaciens (strain C58)) protein is Arginine biosynthesis bifunctional protein ArgJ.